Reading from the N-terminus, the 414-residue chain is CinA-like protein (414 aa).

This sequence belongs to the CinA family.

The chain is CinA-like protein from Akkermansia muciniphila (strain ATCC BAA-835 / DSM 22959 / JCM 33894 / BCRC 81048 / CCUG 64013 / CIP 107961 / Muc).